The sequence spans 97 residues: Unclassified hydrophobin F (97 aa).

The first 17 residues, 1–17, serve as a signal peptide directing secretion; sequence MRVSALAFAAVLSLVSA. 4 cysteine pairs are disulfide-bonded: Cys-24–Cys-75, Cys-39–Cys-67, Cys-40–Cys-58, and Cys-76–Cys-85.

Its subcellular location is the secreted. It localises to the cell wall. Its function is as follows. Aerial growth, conidiation, and dispersal of filamentous fungi in the environment rely upon a capability of their secreting small amphipathic proteins called hydrophobins (HPBs) with low sequence identity. Class I can self-assemble into an outermost layer of rodlet bundles on aerial cell surfaces, conferring cellular hydrophobicity that supports fungal growth, development and dispersal; whereas Class II form highly ordered films at water-air interfaces through intermolecular interactions but contribute nothing to the rodlet structure. In P.expansum, hydrophobins contribute to germination, tolerance to cold stress and mycotoxins patulin and citrinin production. HfbC, HfbD, HfbE, and HfbF have functional redundancy in fungal surface hydrophobicity. This is Unclassified hydrophobin F from Penicillium expansum (Blue mold rot fungus).